Here is a 117-residue protein sequence, read N- to C-terminus: MNLLLTILFITTILSLILAIVSFWLPLMTPDYQKLSPYECGFDPLGSARLPFSIRFFLVAILFLLFDLEIALLLPLPWGDQLPSPMFTLLWASALLIMLTLGLIYEWLQGGLEWAEK.

Transmembrane regions (helical) follow at residues 3-23 (LLLT…IVSF), 56-76 (FFLV…LLPL), and 85-105 (PMFT…GLIY).

This sequence belongs to the complex I subunit 3 family.

It localises to the mitochondrion membrane. It catalyses the reaction a ubiquinone + NADH + 5 H(+)(in) = a ubiquinol + NAD(+) + 4 H(+)(out). In terms of biological role, core subunit of the mitochondrial membrane respiratory chain NADH dehydrogenase (Complex I) that is believed to belong to the minimal assembly required for catalysis. Complex I functions in the transfer of electrons from NADH to the respiratory chain. The immediate electron acceptor for the enzyme is believed to be ubiquinone. This Tetraodon nigroviridis (Spotted green pufferfish) protein is NADH-ubiquinone oxidoreductase chain 3 (MT-ND3).